Reading from the N-terminus, the 466-residue chain is Probable periplasmic serine protease do/HhoA-like (466 aa).

Residues methionine 1 to alanine 29 form the signal peptide. Catalysis depends on charge relay system residues histidine 120, aspartate 150, and serine 226. PDZ domains are found at residues isoleucine 270 to glycine 361 and lysine 367 to aspartate 458.

Belongs to the peptidase S1C family.

It localises to the periplasm. The polypeptide is Probable periplasmic serine protease do/HhoA-like (Haemophilus influenzae (strain ATCC 51907 / DSM 11121 / KW20 / Rd)).